The following is a 260-amino-acid chain: Indole-3-glycerol phosphate synthase (260 aa).

Belongs to the TrpC family.

It carries out the reaction 1-(2-carboxyphenylamino)-1-deoxy-D-ribulose 5-phosphate + H(+) = (1S,2R)-1-C-(indol-3-yl)glycerol 3-phosphate + CO2 + H2O. Its pathway is amino-acid biosynthesis; L-tryptophan biosynthesis; L-tryptophan from chorismate: step 4/5. This chain is Indole-3-glycerol phosphate synthase, found in Staphylococcus saprophyticus subsp. saprophyticus (strain ATCC 15305 / DSM 20229 / NCIMB 8711 / NCTC 7292 / S-41).